A 318-amino-acid polypeptide reads, in one-letter code: Oxygen-evolving enhancer protein 1, chloroplastic (318 aa).

The N-terminal stretch at 1–18 is a signal peptide; sequence MKAVIAVFITLMLTAVVA. The chain crosses the membrane as a helical span at residues 45-65; that stretch reads AAAAALAALTTLSVISPSFAI.

This sequence belongs to the PsbO family.

It localises to the plastid. It is found in the chloroplast thylakoid membrane. In terms of biological role, stabilizes the manganese cluster which is the primary site of water splitting. The sequence is that of Oxygen-evolving enhancer protein 1, chloroplastic from Chattonella marina var. antiqua (Red tide flagellate).